A 289-amino-acid polypeptide reads, in one-letter code: Prepilin leader peptidase/N-methyltransferase (289 aa).

Residues A13 to I33 form a helical membrane-spanning segment. Residues C72, C75, C97, and C100 each coordinate Zn(2+). The next 5 helical transmembrane spans lie at F128–I148, L159–L179, L183–V203, V228–L248, and G256–G276.

This sequence belongs to the peptidase A24 family. Requires Zn(2+) as cofactor.

The protein localises to the cell inner membrane. The enzyme catalyses Typically cleaves a -Gly-|-Phe- bond to release an N-terminal, basic peptide of 5-8 residues from type IV prepilin, and then N-methylates the new N-terminal amino group, the methyl donor being S-adenosyl-L-methionine.. Functionally, plays an essential role in type IV pili and type II pseudopili formation by proteolytically removing the leader sequence from substrate proteins and subsequently monomethylating the alpha-amino group of the newly exposed N-terminal phenylalanine. In Stutzerimonas stutzeri (Pseudomonas stutzeri), this protein is Prepilin leader peptidase/N-methyltransferase (pilD).